The sequence spans 435 residues: MQTTNGSDSTLATSGATPPNQQTPPPPQQWQQQQQQQQQWMAAMQYPPAAAMMMMQQQQMLMYPHQYVPYNQGPYQQHHPQLHQYGSYQQHQHQQHKAIDRGSGDDVKTLWVGDLLHWMDETYLHSCFSHTGEVSSVKVIRNKLTSQSEGYGFVEFLSRAAAEEVLQNYSGSVMPNSDQPFRINWASFSTGEKRAVENGPDLSVFVGDLSPDVTDVLLHETFSDRYPSVKSAKVVIDSNTGRSKGYGFVRFGDENERSRALTEMNGAYCSNRQMRVGIATPKRAIANQQQHSSQAVILAGGHGSNGSMGYGSQSDGESTNATIFVGGIDPDVIDEDLRQPFSQFGEVVSVKIPVGKGCGFVQFADRKSAEDAIESLNGTVIGKNTVRLSWGRSPNKQWRGDSGQQWNGGYSRGHGYNNGGGYANHHDSNNYHGEN.

A compositionally biased stretch (polar residues) spans 1–15 (MQTTNGSDSTLATSG). Disordered regions lie at residues 1–41 (MQTT…QQWM) and 85–104 (YGSY…RGSG). A compositionally biased stretch (low complexity) spans 29-41 (QWQQQQQQQQQWM). RRM domains follow at residues 108–188 (KTLW…WASF), 202–281 (LSVF…IATP), and 321–393 (ATIF…WGRS). Residues 392 to 412 (RSPNKQWRGDSGQQWNGGYSR) form a disordered region.

The protein belongs to the polyadenylate-binding RBP47 family. Interacts with the poly(A) tail of mRNA in nucleus. Expressed at low levels in leaves, stems, flowers, and seedlings.

Its subcellular location is the nucleus. It localises to the cytoplasmic granule. In terms of biological role, heterogeneous nuclear ribonucleoprotein (hnRNP)-protein binding the poly(A) tail of mRNA and probably involved in some steps of pre-mRNA maturation. This is Polyadenylate-binding protein RBP47B (RBP47B) from Arabidopsis thaliana (Mouse-ear cress).